Here is a 402-residue protein sequence, read N- to C-terminus: Cysteine-rich venom protein (402 aa).

The first 13 residues, 1-13 (MNLALFIIFATIF), serve as a signal peptide directing secretion. The SCP domain maps to 57–199 (LETHNQLRNK…VKKVLYTCNY (143 aa)).

The protein belongs to the CRISP family. Post-translationally, contains 7 disulfide bonds. As to expression, expressed by the venom gland.

It localises to the secreted. The polypeptide is Cysteine-rich venom protein (Tityus serrulatus (Brazilian scorpion)).